We begin with the raw amino-acid sequence, 244 residues long: Protein TIFY 10b (244 aa).

In terms of domain architecture, Tify spans 97–132 (QEPEKRQLTIFYGGKVLVFNDFPADKAKGLMQLASK). The Jas signature appears at 185-210 (PIARKASLHRFLEKRKDRLNAKTPYQ). Positions 187–194 (ARKASLHR) match the Nuclear localization signal motif. The segment at 193-244 (HRFLEKRKDRLNAKTPYQASPSDATPVKKEPESQPWLGLGPNAVVKPIERGQ) is disordered. Residues 194-204 (RFLEKRKDRLN) show a composition bias toward basic and acidic residues.

This sequence belongs to the TIFY/JAZ family. Ubiquitinated. Targeted for degradation by the SCF(COI1) E3 ubiquitin ligase-proteasome pathway during jasmonate signaling.

Its subcellular location is the nucleus. Its function is as follows. Repressor of jasmonate responses. The polypeptide is Protein TIFY 10b (Oryza sativa subsp. indica (Rice)).